The following is a 73-amino-acid chain: Heterin-2 (73 aa).

The first 22 residues, 1–22, serve as a signal peptide directing secretion; sequence MQYKTFLVIFLAYLLVTEEALA. Positions 47-73 are excised as a propeptide; it reads KRALKNIFDPYQKNLDLELERLLSQLQ.

This sequence belongs to the non-disulfide-bridged peptide (NDBP) superfamily. Medium-length antimicrobial peptide (group 3) family. As to expression, expressed by the venom gland.

Its subcellular location is the secreted. The protein localises to the target cell membrane. In terms of biological role, amphipathic peptide with potent activities against Gram-positive bacteria (MIC=5.6-30.0 uM) and weaker activities against the tested Gram-negative bacteria (MIC=15 uM to &gt;45 uM). It has high hemolytic activity against human erythrocytes. May act by disrupting the integrity of the bacterial cell membrane. The polypeptide is Heterin-2 (Heterometrus spinifer (Asia giant forest scorpion)).